A 91-amino-acid polypeptide reads, in one-letter code: MSRKKPNILEHELVPKHEVLSVREAAELLRKLKIKPAQLPWISIDDPVVKAIKAKPGDIIRIIRKSPTAGEAIAYRYVVVDTLRPRKKEKV.

This sequence belongs to the archaeal Rpo5/eukaryotic RPB5 RNA polymerase subunit family. As to quaternary structure, part of the RNA polymerase complex.

It localises to the cytoplasm. It carries out the reaction RNA(n) + a ribonucleoside 5'-triphosphate = RNA(n+1) + diphosphate. DNA-dependent RNA polymerase (RNAP) catalyzes the transcription of DNA into RNA using the four ribonucleoside triphosphates as substrates. The polypeptide is DNA-directed RNA polymerase subunit Rpo5 (Staphylothermus marinus (strain ATCC 43588 / DSM 3639 / JCM 9404 / F1)).